A 1041-amino-acid polypeptide reads, in one-letter code: Sodium/potassium-transporting ATPase subunit alpha (1041 aa).

The next 4 membrane-spanning stretches (helical) occupy residues Phe-115–Ile-135, Asn-147–Tyr-167, Leu-312–Gly-332, and Ala-338–Val-358. Asp-394 serves as the catalytic 4-aspartylphosphate intermediate. Lys-526 serves as a coordination point for ATP. Helical transmembrane passes span Phe-808–Ile-828, Met-870–Ile-890, Thr-935–Cys-955, and Trp-970–Pro-990.

This sequence belongs to the cation transport ATPase (P-type) (TC 3.A.3) family. Type IIC subfamily. The sodium/potassium-transporting ATPase is composed of a catalytic alpha subunit, an auxiliary non-catalytic beta subunit and an additional regulatory subunit. As to expression, high levels are found in some adult tissues: Malpighian tubules, indirect flight muscles, tubular leg muscles and throughout the nervous system (brain, optic lobes, retina and ventral thoracic neuromere). Lower levels are detected at the posterior end where the reproductive organs and rectum are located.

Its subcellular location is the cell membrane. It catalyses the reaction K(+)(out) + Na(+)(in) + ATP + H2O = K(+)(in) + Na(+)(out) + ADP + phosphate + H(+). This is the catalytic component of the active enzyme, which catalyzes the hydrolysis of ATP coupled with the exchange of sodium and potassium ions across the plasma membrane. This action creates the electrochemical gradient of sodium and potassium ions, providing the energy for active transport of various nutrients. The chain is Sodium/potassium-transporting ATPase subunit alpha (Atpalpha) from Drosophila melanogaster (Fruit fly).